We begin with the raw amino-acid sequence, 52 residues long: Insulin-2 (52 aa).

3 disulfides stabilise this stretch: cysteine 7/cysteine 38, cysteine 19/cysteine 51, and cysteine 37/cysteine 42.

This sequence belongs to the insulin family. In terms of assembly, heterodimer of a B chain and an A chain linked by two disulfide bonds.

Its subcellular location is the secreted. Functionally, insulin decreases blood glucose concentration. It increases cell permeability to monosaccharides, amino acids and fatty acids. It accelerates glycolysis, the pentose phosphate cycle, and glycogen synthesis in liver. In Huso dauricus (Kaluga sturgeon), this protein is Insulin-2.